The sequence spans 332 residues: Nuclear migration protein nudC (332 aa).

Residues 122–161 (RQQLLDSAGGEPSASNRDGISKPIEKVDDESDKSELGKLM) are disordered. One can recognise a CS domain in the interval 168 to 259 (CTLENYTWTQ…NKMNWWSRLV (92 aa)).

The protein belongs to the nudC family. In terms of assembly, interacts with PCID2.

The protein resides in the cytoplasm. Its function is as follows. Chaperone protein with functions in nuclear localization and cytoplasmic mRNA trafficking. In postmitotic neurons, acts with nudE downstream of dar1 to ensure correct positioning of the nuclei in primary dendrites and as a consequence, is required for determining multipolar neuron morphology. Stabilizes PCID2 in the cytoplasm and thereby is required for promoting cytoplasmic mRNA trafficking. This chain is Nuclear migration protein nudC, found in Drosophila melanogaster (Fruit fly).